The sequence spans 109 residues: U4-lycotoxin-Ls1a (109 aa).

Residues 1–22 (MKVLVLFSVLFLTLFSYSSTEA) form the signal peptide. Positions 23 to 44 (IDELDSDAEEDMLSLMANEQVR) are excised as a propeptide. The knottin domain stretch occupies residues 45–88 (AKACTPRLHDCSHDRHSCCRGELFKDVCYCFYPEGEDKTEVCSC). 4 disulfide bridges follow: C48-C63, C55-C72, C62-C88, and C74-C86. Residues 89-108 (QQPKSHKYIEKVVDKAKTVV) are linear cationic cytotoxin domain.

It belongs to the neurotoxin 19 (CSTX) family. 05 (U4-Lctx) subfamily. In terms of tissue distribution, expressed by the venom gland.

It localises to the secreted. Its function is as follows. Enhances the high-affinity desensitization of human P2RX3 purinoceptors. This chain is U4-lycotoxin-Ls1a, found in Lycosa singoriensis (Wolf spider).